The chain runs to 504 residues: Transcription factor NDT80 (504 aa).

Disordered regions lie at residues 64 to 172 (MHFN…QHHM), 283 to 310 (NGFP…NQHA), and 477 to 504 (RGRS…TPPQ). 4 stretches are compositionally biased toward low complexity: residues 73-87 (QQQQ…QQQQ), 103-145 (QGPT…ARQP), 153-172 (QQAQ…QHHM), and 292-301 (HPQNQPQNHP). Residues 160–488 (QADAQSQAQQ…RSPSSYHKDR (329 aa)) constitute a DNA-binding region (NDT80).

Its subcellular location is the nucleus. Functionally, meiosis-specific transcription factor that binds to the middle sporulation element (MSE) of targeted genes corresponding to the consensus sequence 5'-ACACAAA-3'. Acts as an activator of CDR1 induction by antifungal drugs. Modulates azole sensitivity by controlling the expression of ergosterol biosynthesis genes. Required for hyphal growth in response to different filament-inducing cues and for the proper expression of genes characterizing the filamentous transcriptional program including noteworthy genes encoding cell wall components, such as HWP1, ECE1, RBT4, and ALS3. Is essential for the completion of cell separation through the direct transcriptional regulation of genes encoding the chitinase CHT3 and the cell wall glucosidase SUN41. Required for biofilm formation and plays a key role in microcolony formation under both flow and static conditions and to epithelial surfaces. Essential for virulence. This Candida albicans (strain SC5314 / ATCC MYA-2876) (Yeast) protein is Transcription factor NDT80.